Consider the following 97-residue polypeptide: Large ribosomal subunit protein uL23 (97 aa).

It belongs to the universal ribosomal protein uL23 family. In terms of assembly, part of the 50S ribosomal subunit. Contacts protein L29, and trigger factor when it is bound to the ribosome.

Its function is as follows. One of the early assembly proteins it binds 23S rRNA. One of the proteins that surrounds the polypeptide exit tunnel on the outside of the ribosome. Forms the main docking site for trigger factor binding to the ribosome. The polypeptide is Large ribosomal subunit protein uL23 (Thermoanaerobacter pseudethanolicus (strain ATCC 33223 / 39E) (Clostridium thermohydrosulfuricum)).